Reading from the N-terminus, the 345-residue chain is Trans-enoyl reductase tndF (345 aa).

The segment at 1-26 (MAREHQAAILPQPGGPLSVGMRPTPK) is disordered. Residues 44–49 (CDYYQR), 168–171 (SSSV), 191–194 (SPEH), Tyr209, and 244–245 (LD) each bind NADP(+).

It belongs to the zinc-containing alcohol dehydrogenase family.

Its pathway is secondary metabolite biosynthesis; terpenoid biosynthesis. In terms of biological role, trans-enoyl reductase; part of the gene cluster that mediates the biosynthesis of talaronoid C, a fusicoccane diterpenoid with an unprecedented tricyclic 5/8/6 ring system. The first step in the pathway is performed by the fusicoccadiene synthase tndC that possesses both prenyl transferase and terpene cyclase activity, converting isopentenyl diphosphate and dimethylallyl diphosphate into geranylgeranyl diphosphate (GGDP) and further converting GGDP into talarodiene, a precursor for talaronoid C. The remaining enzymes from the cluster include the cytochrome P450 monooxygenase tndB, the aldehyde reductase tndE and the alcohol dehydrogenase tndF that are involved in the conversion of talarodiene into talaronoid C. In Aspergillus flavipes, this protein is Trans-enoyl reductase tndF.